A 196-amino-acid polypeptide reads, in one-letter code: uncharacterized protein (196 aa).

The N-terminal stretch at 1 to 23 (MSARAPKELRLALPPCLLNRTFA) is a signal peptide. 2 N-linked (GlcNAc...) asparagine glycosylation sites follow: N19 and N26. At 24–60 (SHNASGGSNAGIRSSGAGGGTCITQVGQQLFQSFSST) the chain is on the extracellular side. A helical membrane pass occupies residues 61 to 81 (LVLIVLVTLIFCLIVLSLSTF). Residues 82-196 (HIHKRRMKKR…EGLLQTVVLS (115 aa)) are Cytoplasmic-facing. A disordered region spans residues 93–184 (MQRAQEEYER…AHAASSCLDT (92 aa)). Composition is skewed to basic and acidic residues over residues 95–106 (RAQEEYERDHCS) and 124–135 (HGKETRLERQPR). A compositionally biased stretch (pro residues) spans 161 to 171 (CAPPPPPPVPS). The span at 172–181 (PHGAHAASSC) shows a compositional bias: low complexity.

The protein localises to the membrane. This is an uncharacterized protein from Rattus norvegicus (Rat).